The chain runs to 475 residues: Putative poly(A) polymerase catalytic subunit (475 aa).

The protein belongs to the poxviridae poly(A) polymerase catalytic subunit family. Highly divergent.

The protein localises to the virion. The catalysed reaction is RNA(n) + ATP = RNA(n)-3'-adenine ribonucleotide + diphosphate. Polymerase that creates the 3'-poly(A) tail of mRNAs. The protein is Putative poly(A) polymerase catalytic subunit of Ornithodoros (relapsing fever ticks).